Here is a 154-residue protein sequence, read N- to C-terminus: Ascorbate-specific PTS system EIIA component (154 aa).

A PTS EIIA type-2 domain is found at 6–150 (SLAVNKSIRL…QEVLDLIDRT (145 aa)). H68 serves as the catalytic Tele-phosphohistidine intermediate. Position 68 is a phosphohistidine (H68).

The protein resides in the cytoplasm. Functionally, the phosphoenolpyruvate-dependent sugar phosphotransferase system (sugar PTS), a major carbohydrate active transport system, catalyzes the phosphorylation of incoming sugar substrates concomitantly with their translocation across the cell membrane. The enzyme II UlaABC PTS system is involved in ascorbate transport. This chain is Ascorbate-specific PTS system EIIA component (ulaC), found in Shigella dysenteriae serotype 1 (strain Sd197).